A 291-amino-acid chain; its full sequence is MAGMKEIRGKIKSVQNTRKITKAMEMVAASKMRRAQERMRAARPYAEKVRAIAAHMSRANPEYRHPFMVANDGVKTAGMILVTTDKGLCGGLNTNVLRASLQKFKELEEQGQKVEATAIGGKGLGFLNRFGAKVISQVVHLGDTPHLDKLIGAVKTQLDLYSEGKLSAVYLAYTRFVNTMKQETVIEQLLPLSSEHFDANDGTPATSWDYIYEPDAQAVVDELLVRYVEALVYQAVAENMASEQSARMVAMKAASDNAKTVISELQLSYNKSRQAAITKELSEIVGGAAAV.

The protein belongs to the ATPase gamma chain family. F-type ATPases have 2 components, CF(1) - the catalytic core - and CF(0) - the membrane proton channel. CF(1) has five subunits: alpha(3), beta(3), gamma(1), delta(1), epsilon(1). CF(0) has three main subunits: a, b and c.

Its subcellular location is the cell inner membrane. Produces ATP from ADP in the presence of a proton gradient across the membrane. The gamma chain is believed to be important in regulating ATPase activity and the flow of protons through the CF(0) complex. This chain is ATP synthase gamma chain, found in Burkholderia mallei (strain NCTC 10247).